The following is a 616-amino-acid chain: MASDGNGAAAVAALGISGGGGDDWAPPLRRNLPLLAPHEVKLAKLLLSEGQSHLFEHWPEPGVDDDKKRNFFDQVCRLNSSYPGGLASYIQNARKLLADSKAGKNPYDGFSPSVPSGEVLTFGDDNFVSLEEAGVKEARHAAFVLVAGGLGERLGYKGIKVALPRETTTGKCFLQHYIESILALQEASCKLVEGECNTKIPFVIMTSDDTNALTVKLLESNSYFGMEPSQVHILKQEKVACLADNDARLALDPNDKYKIQTKPHGHGDVHALLYSSGLLEQWKSTGRKWVLFFQDTNGLLFNAIPSALGVSATKGYNVNSLAVPRKAKEAIGGITKLTHVDGRTMVINVEYNQLDPLLRATGHPDGDANCETGYSPYPGNINQLILEIGPYMEELQKTHGAISEFVNPKYTDSTKTAFKSSTRLECMMQDYPKTLPPSAKVGFTVMDAWLAYAPVKNNPEDAAKVPKGNPYHSATSGEMAIYRANSLILRKAGAQIADPVIDTFNGQEVEVWPRITWIPRWGLIFKDVKAKVHSNSSVSQRSALVINGKNITIQGLSLDGTLIVNAKDEAKFNVTGHIENKGWTIQHVDHKDTSEKEEIRIRGFKFNKVEQLELNY.

This sequence belongs to the USP family. The cofactor is Mg(2+). It depends on Mn(2+) as a cofactor.

The catalysed reaction is a monosaccharide 1-phosphate + UTP + H(+) = a UDP-monosaccharide + diphosphate. In terms of biological role, may function as the terminal enzyme of the myo-inositol oxidation (MIO) pathway. May also play a role in the salvage pathway for synthesis of nucleotide sugars. The polypeptide is UDP-sugar pyrophosphorylase (USP) (Oryza sativa subsp. indica (Rice)).